Consider the following 135-residue polypeptide: Large ribosomal subunit protein eL32 (135 aa).

K9 participates in a covalent cross-link: Glycyl lysine isopeptide (Lys-Gly) (interchain with G-Cter in SUMO2). The residue at position 50 (K50) is an N6-succinyllysine. S62 carries the phosphoserine modification.

This sequence belongs to the eukaryotic ribosomal protein eL32 family. As to quaternary structure, component of the large ribosomal subunit.

The protein resides in the cytoplasm. In terms of biological role, component of the large ribosomal subunit. The ribosome is a large ribonucleoprotein complex responsible for the synthesis of proteins in the cell. In Macaca fascicularis (Crab-eating macaque), this protein is Large ribosomal subunit protein eL32 (RPL32).